The chain runs to 997 residues: Glutamate [NMDA] receptor subunit 1 (997 aa).

Residues 1–26 (MAVAGFVFCRPLFGLAIVLLVAPIDA) form the signal peptide. The Extracellular segment spans residues 27 to 573 (AQRHTASDNP…TLVSFLQPFS (547 aa)). Residues Asn-258, Asn-314, Asn-345, Asn-397, Asn-454, Asn-481, and Asn-501 are each glycosylated (N-linked (GlcNAc...) asparagine). Glycine contacts are provided by residues 530–532 (PLT) and Arg-537. Residues 574–594 (NTLWILVMVSVHVVALVLYLL) traverse the membrane as a helical segment. Topologically, residues 595–651 (DRFSPFGRFKLSHSDSNEEKALNLSSAVWFAWGVLLNSGIGEGTPRSFSARVLGMVW) are cytoplasmic. The chain crosses the membrane as a helical span at residues 652-672 (AGFAMIIVASYTANLAAFLVL). At 673-831 (ERPKTKLSGI…KTPNTLGLKN (159 aa)) the chain is on the extracellular side. Asn-693 is a glycosylation site (N-linked (GlcNAc...) asparagine). 2 residues coordinate glycine: Ser-703 and Asp-747. A helical membrane pass occupies residues 832–852 (MAGVFILVGVGIAGGVGLIII). At 853-997 (EVIYKKHQVK…YTSDVSHLVV (145 aa)) the chain is on the cytoplasmic side. Residues 970 to 997 (LGKTRPQQSVLPPRYSPGYTSDVSHLVV) are disordered. Residues 987-997 (GYTSDVSHLVV) are compositionally biased toward polar residues.

The protein belongs to the glutamate-gated ion channel (TC 1.A.10.1) family. Forms a heteromeric NMDA channel with Nmdar2.

Its subcellular location is the cell membrane. It is found in the postsynaptic cell membrane. It localises to the postsynaptic density. NMDA receptor subtype of glutamate-gated ion channels with high calcium permeability and voltage-dependent sensitivity to magnesium. Mediated by glycine. This protein plays a key role in synaptic plasticity, synaptogenesis, excitotoxicity, memory acquisition and learning. It mediates neuronal functions in glutamate neurotransmission. Is involved in the cell surface targeting of NMDA receptors. Plays a role in associative learning and in long-term memory consolidation. The sequence is that of Glutamate [NMDA] receptor subunit 1 from Drosophila sechellia (Fruit fly).